The sequence spans 93 residues: Small ribosomal subunit protein uS19 (93 aa).

Belongs to the universal ribosomal protein uS19 family.

Functionally, protein S19 forms a complex with S13 that binds strongly to the 16S ribosomal RNA. This chain is Small ribosomal subunit protein uS19, found in Helicobacter pylori (strain G27).